Reading from the N-terminus, the 113-residue chain is Large ribosomal subunit protein uL22 (113 aa).

It belongs to the universal ribosomal protein uL22 family. In terms of assembly, part of the 50S ribosomal subunit.

This protein binds specifically to 23S rRNA; its binding is stimulated by other ribosomal proteins, e.g. L4, L17, and L20. It is important during the early stages of 50S assembly. It makes multiple contacts with different domains of the 23S rRNA in the assembled 50S subunit and ribosome. Its function is as follows. The globular domain of the protein is located near the polypeptide exit tunnel on the outside of the subunit, while an extended beta-hairpin is found that lines the wall of the exit tunnel in the center of the 70S ribosome. The chain is Large ribosomal subunit protein uL22 from Desulforamulus reducens (strain ATCC BAA-1160 / DSM 100696 / MI-1) (Desulfotomaculum reducens).